The primary structure comprises 239 residues: Methylthioribulose-1-phosphate dehydratase (239 aa).

Cys94 lines the substrate pocket. Zn(2+) contacts are provided by His112 and His114. Glu136 serves as the catalytic Proton donor/acceptor. His192 contacts Zn(2+).

The protein belongs to the aldolase class II family. MtnB subfamily. It depends on Zn(2+) as a cofactor.

Its subcellular location is the cytoplasm. The catalysed reaction is 5-(methylsulfanyl)-D-ribulose 1-phosphate = 5-methylsulfanyl-2,3-dioxopentyl phosphate + H2O. It functions in the pathway amino-acid biosynthesis; L-methionine biosynthesis via salvage pathway; L-methionine from S-methyl-5-thio-alpha-D-ribose 1-phosphate: step 2/6. In terms of biological role, catalyzes the dehydration of methylthioribulose-1-phosphate (MTRu-1-P) into 2,3-diketo-5-methylthiopentyl-1-phosphate (DK-MTP-1-P). Functions in the methionine salvage pathway. May play a role in apoptosis. The sequence is that of Methylthioribulose-1-phosphate dehydratase from Xenopus laevis (African clawed frog).